Reading from the N-terminus, the 213-residue chain is uncharacterized protein (213 aa).

Residues G53, E74, and D97 each coordinate S-adenosyl-L-methionine.

It belongs to the methyltransferase superfamily. YrrT family.

In terms of biological role, could be a S-adenosyl-L-methionine-dependent methyltransferase. This is an uncharacterized protein from Bacillus velezensis (strain DSM 23117 / BGSC 10A6 / LMG 26770 / FZB42) (Bacillus amyloliquefaciens subsp. plantarum).